A 415-amino-acid polypeptide reads, in one-letter code: SNF1 protein kinase subunit beta-2 (415 aa).

3 disordered regions span residues 1-43, 55-158, and 249-276; these read MGTT…EMDA, KCSD…PSEI, and EKNP…SSIA. The N-myristoyl glycine moiety is linked to residue G2. Residues 9 to 19 are compositionally biased toward basic residues; sequence AQKKQTTKKCR. The segment covering 55 to 69 has biased composition (polar residues); it reads KCSDSQDAGQPSREG. Phosphoserine is present on S66. 2 stretches are compositionally biased toward basic and acidic residues: residues 122-150 and 249-264; these read PKQD…RAKE and EKNP…EADS. The kinase-interacting sequence (KIS); required for interaction with SNF1 stretch occupies residues 154 to 335; the sequence is GPSEIKSSLM…LDRQQSNTDT (182 aa). Phosphoserine is present on S298. The association with SNF1 kinase complex (ASC) domain; required for interaction with SNF4 stretch occupies residues 336 to 415; the sequence is SWLTPPQLPP…QILYTPIESS (80 aa).

It belongs to the 5'-AMP-activated protein kinase beta subunit family. In terms of assembly, component of the SNF1 kinase complex, a heterotrimeric complex composed of the catalytic alpha subunit SNF1, one of the three related beta subunits SIP1, SIP2 or GAL83, and the regulatory gamma subunit SNF4. The beta subunit serves as a bridge between the catalytic and the regulatory subunit. Interacts (via KIS domain) with SNF1. Interacts (via ASC domain) with SNF4. Post-translationally, phosphorylated by SNF1 in vitro.

The protein resides in the cytoplasm. It is found in the cell membrane. Functionally, beta subunit of the SNF1 kinase complex, which is required for transcriptional, metabolic, and developmental adaptations in response to glucose limitation. Has a structural role, mediating heterotrimer formation, and a regulatory role, defining carbon source-regulated subcellular location and substrate specificity of the SNF1 kinase complex. Involved in the regulation of aging. Acts as a negative regulator of nuclear SNF1 activity in young cells by sequestering its activating gamma subunit at the plasma membrane. The protein is SNF1 protein kinase subunit beta-2 (SIP2) of Saccharomyces cerevisiae (strain ATCC 204508 / S288c) (Baker's yeast).